The primary structure comprises 101 residues: Protein Tat (101 aa).

Residues 1-24 are interaction with human CREBBP; that stretch reads MEPVDPNREPWNHPGSQPKTACTN. The transactivation stretch occupies residues 1–48; that stretch reads MEPVDPNREPWNHPGSQPKTACTNCYCKKCCYHCQVCFLQKGLGISYG. Zn(2+) is bound by residues C22, C25, and C27. Residues 22-37 form a cysteine-rich region; that stretch reads CTNCYCKKCCYHCQVC. Residue K28 is modified to N6-acetyllysine; by host PCAF. Zn(2+) contacts are provided by C30, H33, C34, and C37. The core stretch occupies residues 38-48; sequence FLQKGLGISYG. The segment at 48–101 is disordered; the sequence is GRKKRRQRRSAPPGSKTHQDLIPKQPLSQTQRKPTGPEESKKEVESKAEPDRFD. Residues 49–57 carry the Nuclear localization signal, RNA-binding (TAR), and protein transduction motif; that stretch reads RKKRRQRRS. The interaction with the host capping enzyme RNGTT stretch occupies residues 49-86; the sequence is RKKRRQRRSAPPGSKTHQDLIPKQPLSQTQRKPTGPEE. N6-acetyllysine; by host EP300 and GCN5L2 occurs at positions 50 and 51. Asymmetric dimethylarginine; by host PRMT6 occurs at positions 52 and 53. K71 participates in a covalent cross-link: Glycyl lysine isopeptide (Lys-Gly) (interchain with G-Cter in ubiquitin). Positions 82 to 101 are enriched in basic and acidic residues; that stretch reads TGPEESKKEVESKAEPDRFD.

The protein belongs to the lentiviruses Tat family. Interacts with host CCNT1. Associates with the P-TEFb complex composed at least of Tat, P-TEFb (CDK9 and CCNT1), TAR RNA, RNA Pol II. Recruits the HATs CREBBP, TAF1/TFIID, EP300, PCAF and GCN5L2. Interacts with host KAT5/Tip60; this interaction targets the latter to degradation. Interacts with the host deacetylase SIRT1. Interacts with host capping enzyme RNGTT; this interaction stimulates RNGTT. Binds to host KDR, and to the host integrins ITGAV/ITGB3 and ITGA5/ITGB1. Interacts with host KPNB1/importin beta-1 without previous binding to KPNA1/importin alpha-1. Interacts with EIF2AK2. Interacts with host nucleosome assembly protein NAP1L1; this interaction may be required for the transport of Tat within the nucleus, since the two proteins interact at the nuclear rim. Interacts with host C1QBP/SF2P32; this interaction involves lysine-acetylated Tat. Interacts with the host chemokine receptors CCR2, CCR3 and CXCR4. Interacts with host DPP4/CD26; this interaction may trigger an anti-proliferative effect. Interacts with host LDLR. Interacts with the host extracellular matrix metalloproteinase MMP1. Interacts with host PRMT6; this interaction mediates Tat's methylation. Interacts with, and is ubiquitinated by MDM2/Hdm2. Interacts with host PSMC3 and HTATIP2. Interacts with STAB1; this interaction may overcome SATB1-mediated repression of IL2 and IL2RA (interleukin) in T cells by binding to the same domain than HDAC1. Interacts (when acetylated) with human CDK13, thereby increasing HIV-1 mRNA splicing and promoting the production of the doubly spliced HIV-1 protein Nef. Interacts with host TBP; this interaction modulates the activity of transcriptional pre-initiation complex. Interacts with host RELA. Interacts with host PLSCR1; this interaction negatively regulates Tat transactivation activity by altering its subcellular distribution. Post-translationally, asymmetrical arginine methylation by host PRMT6 seems to diminish the transactivation capacity of Tat and affects the interaction with host CCNT1. Acetylation by EP300, CREBBP, GCN5L2/GCN5 and PCAF regulates the transactivation activity of Tat. EP300-mediated acetylation of Lys-50 promotes dissociation of Tat from the TAR RNA through the competitive binding to PCAF's bromodomain. In addition, the non-acetylated Tat's N-terminus can also interact with PCAF. PCAF-mediated acetylation of Lys-28 enhances Tat's binding to CCNT1. Lys-50 is deacetylated by SIRT1. In terms of processing, polyubiquitination by host MDM2 does not target Tat to degradation, but activates its transactivation function and fosters interaction with CCNT1 and TAR RNA. Post-translationally, phosphorylated by EIF2AK2 on serine and threonine residues adjacent to the basic region important for TAR RNA binding and function. Phosphorylation of Tat by EIF2AK2 is dependent on the prior activation of EIF2AK2 by dsRNA.

The protein resides in the host nucleus. Its subcellular location is the host nucleolus. It localises to the host cytoplasm. The protein localises to the secreted. Transcriptional activator that increases RNA Pol II processivity, thereby increasing the level of full-length viral transcripts. Recognizes a hairpin structure at the 5'-LTR of the nascent viral mRNAs referred to as the transactivation responsive RNA element (TAR) and recruits the cyclin T1-CDK9 complex (P-TEFb complex) that will in turn hyperphosphorylate the RNA polymerase II to allow efficient elongation. The CDK9 component of P-TEFb and other Tat-activated kinases hyperphosphorylate the C-terminus of RNA Pol II that becomes stabilized and much more processive. Other factors such as HTATSF1/Tat-SF1, SUPT5H/SPT5, and HTATIP2 are also important for Tat's function. Besides its effect on RNA Pol II processivity, Tat induces chromatin remodeling of proviral genes by recruiting the histone acetyltransferases (HATs) CREBBP, EP300 and PCAF to the chromatin. This also contributes to the increase in proviral transcription rate, especially when the provirus integrates in transcriptionally silent region of the host genome. To ensure maximal activation of the LTR, Tat mediates nuclear translocation of NF-kappa-B by interacting with host RELA. Through its interaction with host TBP, Tat may also modulate transcription initiation. Tat can reactivate a latently infected cell by penetrating in it and transactivating its LTR promoter. In the cytoplasm, Tat is thought to act as a translational activator of HIV-1 mRNAs. In terms of biological role, extracellular circulating Tat can be endocytosed by surrounding uninfected cells via the binding to several surface receptors such as CD26, CXCR4, heparan sulfate proteoglycans (HSPG) or LDLR. Neurons are rarely infected, but they internalize Tat via their LDLR. Through its interaction with nuclear HATs, Tat is potentially able to control the acetylation-dependent cellular gene expression. Modulates the expression of many cellular genes involved in cell survival, proliferation or in coding for cytokines or cytokine receptors. Tat plays a role in T-cell and neurons apoptosis. Tat induced neurotoxicity and apoptosis probably contribute to neuroAIDS. Circulating Tat also acts as a chemokine-like and/or growth factor-like molecule that binds to specific receptors on the surface of the cells, affecting many cellular pathways. In the vascular system, Tat binds to ITGAV/ITGB3 and ITGA5/ITGB1 integrins dimers at the surface of endothelial cells and competes with bFGF for heparin-binding sites, leading to an excess of soluble bFGF. The sequence is that of Protein Tat from Homo sapiens (Human).